We begin with the raw amino-acid sequence, 1974 residues long: Protein Ycf2 (1974 aa).

Positions 219–246 (SQLKGSSYQSRDHLDSISNEDSEYHNQR) are disordered. Residue 1308–1315 (GSIGTGRS) participates in ATP binding.

The protein belongs to the Ycf2 family.

The protein localises to the plastid. It is found in the chloroplast stroma. Probable ATPase of unknown function. Its presence in a non-photosynthetic plant (Epifagus virginiana) and experiments in tobacco indicate that it has an essential function which is probably not related to photosynthesis. The sequence is that of Protein Ycf2 from Jasminum nudiflorum (Winter jasmine).